The following is a 552-amino-acid chain: Urocanate hydratase (552 aa).

NAD(+) contacts are provided by residues 49 to 50 (GG), Gln127, 173 to 175 (GMG), Asp193, 239 to 240 (NA), 260 to 264 (QTSAH), 270 to 271 (YI), and Tyr319. The active site involves Cys407. Gly489 serves as a coordination point for NAD(+).

Belongs to the urocanase family. The cofactor is NAD(+).

It localises to the cytoplasm. The enzyme catalyses 4-imidazolone-5-propanoate = trans-urocanate + H2O. Its pathway is amino-acid degradation; L-histidine degradation into L-glutamate; N-formimidoyl-L-glutamate from L-histidine: step 2/3. Functionally, catalyzes the conversion of urocanate to 4-imidazolone-5-propionate. This chain is Urocanate hydratase, found in Bacillus cereus (strain ATCC 14579 / DSM 31 / CCUG 7414 / JCM 2152 / NBRC 15305 / NCIMB 9373 / NCTC 2599 / NRRL B-3711).